The primary structure comprises 360 residues: MSTIDLIKNVTKREERPVYPFTAIVGQEEMKLALILNVIDPDIGGVMIMGDRGTGKSTTIRALVDLLPEIEVVTNDPFNSDPRDPDLMSDEVREKINNKQEVPTIKTKIKIVDLPLGATEDRVCGTIDIERALNEGVKAFEPGLLAKANRGILYVDEVNLLDDHLVDILLDSAASGWNTVEREGISVRHPAKFILVGSGNPEEGELRPQLLDRFGMHAEIRTVKDPDLRVKIVEERSSFDENPQVFRKAYEQSQEDVKSQIIQARKNLANVQMDRELRIKVSQICSELDVDGLRGDLVINRAAKALAAFEGRDKVLPKDILKIITLCLRHRLRKDPLESIDSGSKVESKFYEVFGLLEEN.

An ATP-binding site is contributed by 50–57; it reads GDRGTGKS. A disulfide bond links C285 and C327.

It belongs to the Mg-chelatase subunits D/I family. As to quaternary structure, the magnesium chelatase complex is a heterotrimer consisting of subunits CHLI, CHLD and CHLH.

Its subcellular location is the plastid. The protein localises to the chloroplast. It catalyses the reaction protoporphyrin IX + Mg(2+) + ATP + H2O = Mg-protoporphyrin IX + ADP + phosphate + 3 H(+). The protein operates within porphyrin-containing compound metabolism; chlorophyll biosynthesis. Redox regulation; active in reducing conditions, inactive in oxidizing conditions. Thioredoxins f and m mediate the reversible reductive activation of oxidized CHLI. In terms of biological role, involved in chlorophyll biosynthesis. Catalyzes the insertion of magnesium ion into protoporphyrin IX to yield Mg-protoporphyrin IX. The magnesium-chelatase is a complex of three subunits, CHLI, CHLD and CHLH. The reaction takes place in two steps, with an ATP-dependent activation followed by an ATP-dependent chelation step. This is Magnesium-chelatase subunit ChlI (chlI) from Mesostigma viride (Green alga).